The sequence spans 102 residues: Transcription factor UPBEAT1 (102 aa).

One can recognise a bHLH domain in the interval 32-82 (IRPRKSVEASRRPCRAIHRRVKTLKELVPNTKTSEGLDGLFRQTADYILAL).

In terms of assembly, homodimer. Expressed in the root vascular tissue and in root hairs and lateral root caps. Detected at the protein level in all cell files in the elongation zone.

Its subcellular location is the nucleus. Functionally, transcription factor that modulates the balance between cellular proliferation and differentiation in root growth. Does not act through cytokinin and auxin signaling, but by repressing peroxidase expression in the elongation zone. The polypeptide is Transcription factor UPBEAT1 (UPB1) (Arabidopsis thaliana (Mouse-ear cress)).